The sequence spans 380 residues: Hydrogenase maturation factor HypD2 (380 aa).

Residues Cys36, Cys64, and Cys67 each coordinate Fe cation.

Belongs to the HypD family. The cofactor is [4Fe-4S] cluster.

Its pathway is protein modification; [NiFe] hydrogenase maturation. Functionally, involved in the maturation of [NiFe] hydrogenases. Involved in the biosynthesis of the Fe(CN)(2)CO cofactor. The protein is Hydrogenase maturation factor HypD2 (hypD2) of Bradyrhizobium diazoefficiens (strain JCM 10833 / BCRC 13528 / IAM 13628 / NBRC 14792 / USDA 110).